The chain runs to 218 residues: MDKSESTSAGRNRRRRPRRGSRSAPSSADANFRVLSQQLSRLNKTLAAGRPTINHPTFVGSERCRPGYTFTSITLKPPKIDRGSYYGKRLLLPDSVTEYDKKLVSRIQIRVNPLPKFDSTVWVTVRKVPASSDLSVAAISAMFADGASPVLVYQYAASGVQANNKFLYDLSAMRADIGDMRKYAVLVYSKDDALETDELVLHVDIEHQRIPTSGVLPV.

Met1 is modified (N-acetylmethionine; by host). Residues 1-28 (MDKSESTSAGRNRRRRPRRGSRSAPSSA) form a disordered region. Residues 11–21 (RNRRRRPRRGS) show a composition bias toward basic residues.

The protein belongs to the cucumovirus capsid protein family.

The protein resides in the virion. Capsid protein. Probably binds RNA and plays a role in packaging. This chain is Capsid protein, found in Cucumis sativus (Cucumber).